The chain runs to 312 residues: MAVAMTPAAADELHTIVDLIRYGASRFSEAGLTFGHSYDNALDEATQLVLHALHLPPDLGPAYGQARLLHTEKECVLALFERRVTERVPVAYLTGDAWFAGLNFKSDARALVPRSPIAELIQAGFEPWLAGRDVRHALDLCTGSGCIAIAMGHYNPHWSVDGADISEDALSLALENKVRLLAHNVELIKSDVFAGLVGRRYQLIVSNPPYVTDAETDALPQEYGYEPELGLRAGPDGLNLVLKILRDAPAHLDEEGLLICEVGESEQQLVRLLPQVDFAWVEFKVGQMGVFAVECRELIAHHDPIAALAAER.

Belongs to the protein N5-glutamine methyltransferase family. PrmB subfamily.

The catalysed reaction is L-glutaminyl-[ribosomal protein uL3] + S-adenosyl-L-methionine = N(5)-methyl-L-glutaminyl-[ribosomal protein uL3] + S-adenosyl-L-homocysteine + H(+). Functionally, methylates large ribosomal subunit protein uL3 on a specific glutamine residue. The chain is Ribosomal protein uL3 glutamine methyltransferase from Xylella fastidiosa (strain 9a5c).